A 421-amino-acid polypeptide reads, in one-letter code: Histidine--tRNA ligase (421 aa).

This sequence belongs to the class-II aminoacyl-tRNA synthetase family. Homodimer.

Its subcellular location is the cytoplasm. It carries out the reaction tRNA(His) + L-histidine + ATP = L-histidyl-tRNA(His) + AMP + diphosphate + H(+). This chain is Histidine--tRNA ligase, found in Thermus thermophilus (strain ATCC BAA-163 / DSM 7039 / HB27).